The following is a 313-amino-acid chain: Protein FixB (313 aa).

255-283 contacts FAD; that stretch reads LYLAVGISGQIQHMVGANASQTIFAINKD.

This sequence belongs to the ETF alpha-subunit/FixB family. In terms of assembly, heterodimer of FixA and FixB.

Its pathway is amine and polyamine metabolism; carnitine metabolism. Its function is as follows. Required for anaerobic carnitine reduction. May bring reductant to CaiA. This chain is Protein FixB, found in Escherichia coli (strain K12 / MC4100 / BW2952).